The following is a 473-amino-acid chain: Trehalose-6-phosphate synthase (473 aa).

Arg10 is a D-glucose 6-phosphate binding site. 21–22 (GG) contributes to the UDP-alpha-D-glucose binding site. Positions 76 and 130 each coordinate D-glucose 6-phosphate. Positions 262 and 267 each coordinate UDP-alpha-D-glucose. A D-glucose 6-phosphate-binding site is contributed by Arg300. UDP-alpha-D-glucose-binding positions include Phe339 and 365–369 (LVAKE). The segment at 454-473 (TPRSPERQQQNNVATFPKLA) is disordered.

Belongs to the glycosyltransferase 20 family. As to quaternary structure, homotetramer.

The enzyme catalyses D-glucose 6-phosphate + UDP-alpha-D-glucose = alpha,alpha-trehalose 6-phosphate + UDP + H(+). It functions in the pathway glycan biosynthesis; trehalose biosynthesis. Probably involved in the osmoprotection via the biosynthesis of trehalose. Catalyzes the transfer of glucose from UDP-alpha-D-glucose (UDP-Glc) to D-glucose 6-phosphate (Glc-6-P) to form trehalose-6-phosphate. Acts with retention of the anomeric configuration of the UDP-sugar donor. This chain is Trehalose-6-phosphate synthase, found in Salmonella choleraesuis (strain SC-B67).